The following is a 235-amino-acid chain: uncharacterized protein (235 aa).

Transmembrane regions (helical) follow at residues 41-61 (IFWH…IYRL), 71-91 (LRTF…IEFP), and 129-149 (IGII…TPTI).

It localises to the membrane. This is an uncharacterized protein from Schizosaccharomyces pombe (strain 972 / ATCC 24843) (Fission yeast).